The chain runs to 309 residues: Tyrosine recombinase XerD (309 aa).

In terms of domain architecture, Core-binding (CB) spans 3–88 (MRASLAIENF…ALRQFFRFLY (86 aa)). The region spanning 109 to 302 (PLPKIMSVEN…LEERLHKLVS (194 aa)) is the Tyr recombinase domain. Catalysis depends on residues arginine 158, lysine 182, histidine 254, arginine 257, and histidine 280. The active-site O-(3'-phospho-DNA)-tyrosine intermediate is tyrosine 289.

The protein belongs to the 'phage' integrase family. XerD subfamily. Forms a cyclic heterotetrameric complex composed of two molecules of XerC and two molecules of XerD.

It localises to the cytoplasm. Its function is as follows. Site-specific tyrosine recombinase, which acts by catalyzing the cutting and rejoining of the recombining DNA molecules. The XerC-XerD complex is essential to convert dimers of the bacterial chromosome into monomers to permit their segregation at cell division. It also contributes to the segregational stability of plasmids. The polypeptide is Tyrosine recombinase XerD (Brucella melitensis biotype 1 (strain ATCC 23456 / CCUG 17765 / NCTC 10094 / 16M)).